The sequence spans 196 residues: Proteasome subunit beta 1 (196 aa).

Residues 1–6 (MEKKTG) constitute a propeptide, removed in mature form; by autocatalysis. T7 functions as the Nucleophile in the catalytic mechanism.

This sequence belongs to the peptidase T1B family. As to quaternary structure, the 20S proteasome core is composed of 14 alpha and 14 beta subunits that assemble into four stacked heptameric rings, resulting in a barrel-shaped structure. The two inner rings, each composed of seven catalytic beta subunits, are sandwiched by two outer rings, each composed of seven alpha subunits. The catalytic chamber with the active sites is on the inside of the barrel. Has a gated structure, the ends of the cylinder being occluded by the N-termini of the alpha-subunits. Is capped at one or both ends by the proteasome regulatory ATPase, PAN.

It localises to the cytoplasm. It catalyses the reaction Cleavage of peptide bonds with very broad specificity.. Its activity is regulated as follows. The formation of the proteasomal ATPase PAN-20S proteasome complex, via the docking of the C-termini of PAN into the intersubunit pockets in the alpha-rings, triggers opening of the gate for substrate entry. Interconversion between the open-gate and close-gate conformations leads to a dynamic regulation of the 20S proteasome proteolysis activity. Functionally, component of the proteasome core, a large protease complex with broad specificity involved in protein degradation. The chain is Proteasome subunit beta 1 from Pyrococcus furiosus (strain ATCC 43587 / DSM 3638 / JCM 8422 / Vc1).